A 426-amino-acid chain; its full sequence is 3-phosphoshikimate 1-carboxyvinyltransferase (426 aa).

The 3-phosphoshikimate site is built by K22, S23, and R27. Position 22 (K22) interacts with phosphoenolpyruvate. Phosphoenolpyruvate is bound by residues G96 and R124. 3-phosphoshikimate-binding residues include S170, S171, Q172, S198, D314, N337, and K341. Q172 provides a ligand contact to phosphoenolpyruvate. D314 functions as the Proton acceptor in the catalytic mechanism. Phosphoenolpyruvate contacts are provided by R345, R387, and K412.

It belongs to the EPSP synthase family. Monomer.

It is found in the cytoplasm. It carries out the reaction 3-phosphoshikimate + phosphoenolpyruvate = 5-O-(1-carboxyvinyl)-3-phosphoshikimate + phosphate. It participates in metabolic intermediate biosynthesis; chorismate biosynthesis; chorismate from D-erythrose 4-phosphate and phosphoenolpyruvate: step 6/7. Its function is as follows. Catalyzes the transfer of the enolpyruvyl moiety of phosphoenolpyruvate (PEP) to the 5-hydroxyl of shikimate-3-phosphate (S3P) to produce enolpyruvyl shikimate-3-phosphate and inorganic phosphate. In Colwellia psychrerythraea (strain 34H / ATCC BAA-681) (Vibrio psychroerythus), this protein is 3-phosphoshikimate 1-carboxyvinyltransferase.